An 87-amino-acid polypeptide reads, in one-letter code: Protein Isd11 (87 aa).

Belongs to the complex I LYR family. As to quaternary structure, interacts with IscS; the interaction enhances cysteine desulfurase activity of IscS. Component of a complex, at least composed of IscS, Isd11 and IscU.

It is found in the mitochondrion. It functions in the pathway cofactor biosynthesis; iron-sulfur cluster biosynthesis. Its function is as follows. Participates in iron-sulfur cluster formation (ISC) pathway for iron-sulfur (Fe-S) cluster biogenesis. Enhances cysteine desulfurase activity of IscS. This Plasmodium falciparum (isolate 3D7) protein is Protein Isd11.